A 401-amino-acid chain; its full sequence is O-antigen ligase (401 aa).

Topologically, residues 1 to 20 (MFAATRLSRLRHDTSRILSH) are cytoplasmic. The helical transmembrane segment at 21–37 (WILPLGWLALLTGMFWV) threads the bilayer. At 38–42 (GDRSD) the chain is on the periplasmic side. A helical transmembrane segment spans residues 43–61 (YHRLFYILLAAPTLLYVIL). Residues 62–72 (QPRLLRPLTGS) lie on the Cytoplasmic side of the membrane. The helical transmembrane segment at 73–92 (PLFIAFLAFSSYMMLSLSWS) threads the bilayer. At 93–103 (TPENSTGSLLK) the chain is on the periplasmic side. Residues 104–122 (RPLYIALLFFCAAILALEA) traverse the membrane as a helical segment. Over 123–129 (PLRLKTA) the chain is Cytoplasmic. A helical transmembrane segment spans residues 130 to 150 (TWLAALGAVISAAATLLRYYW). Residues 151–161 (DANPLRLTGYG) lie on the Periplasmic side of the membrane. A helical transmembrane segment spans residues 162–183 (ALYNPLLSAHVYGAFTALWLAY). Residues 184 to 189 (WMQSRP) lie on the Cytoplasmic side of the membrane. Residues 190 to 208 (ILAPLPLISLALLGGLLIA) traverse the membrane as a helical segment. Topologically, residues 209 to 212 (TGSR) are periplasmic. A helical membrane pass occupies residues 213–229 (TPLVGLTAALMWLVLAG). The Cytoplasmic portion of the chain corresponds to 230–234 (DRKKA). Residues 235–252 (LIALALALAGALLGYILY) traverse the membrane as a helical segment. Topologically, residues 253 to 306 (PEVITQRGASFRPEIWADALRQISEHPWLGHGYDHPMRIVLSNGMLLADPHNIE) are periplasmic. The WZY-C stretch occupies residues 258–319 (QRGASFRPEI…LFAGGIIGLL (62 aa)). The helical transmembrane segment at 307–331 (LGVLFAGGIIGLLLWVAIYALAFGF) threads the bilayer. The Cytoplasmic portion of the chain corresponds to 332-339 (SWKNRKSP). A helical transmembrane segment spans residues 340-357 (AVLLASTWLVFGLAAGLT). At 358 to 368 (EGNAFLPRPKE) the chain is on the periplasmic side. The helical transmembrane segment at 369–385 (HWFLIWIPMALLYALWI) threads the bilayer. Over 386-401 (QQRFAASRRGEDIAAP) the chain is Cytoplasmic.

Belongs to the O-antigen ligase family. As to quaternary structure, homodimer.

Its subcellular location is the cell inner membrane. It carries out the reaction a lipid-linked O antigen + a lipid A-core oligosaccharide = a lipopolysaccharide + a polyisoprenyl diphosphate.. It functions in the pathway bacterial outer membrane biogenesis; lipopolysaccharide biosynthesis. With respect to regulation, activity does not require ATP and magnesium ions. Transferase involved in the biosynthesis of the lipopolysaccharide (LPS). Catalyzes the transfer of a polymerized O-antigen molecule from its polyprenyl diphosphate membrane anchor to a terminal sugar of the lipid A-core oligosaccharide, finalizing the biosynthesis of the lipopolysaccharide. Required for the attachment of both A-band and B-band O-antigens, two forms of O-antigen produced by P.aeruginosa, onto the lipid A-core receptors. Important for cell wall integrity and motility of the bacteria. In Pseudomonas aeruginosa (strain ATCC 15692 / DSM 22644 / CIP 104116 / JCM 14847 / LMG 12228 / 1C / PRS 101 / PAO1), this protein is O-antigen ligase.